The primary structure comprises 422 residues: UPF0761 membrane protein XAC0937 (422 aa).

6 consecutive transmembrane segments (helical) span residues 45 to 65 (VFALVPLAIVVFGVLSAFPAF), 102 to 122 (FTVAGMVALVASLLITLHSIE), 151 to 171 (GTMLAAASMAMAAYVFALPLF), 179 to 199 (LAEFAWRLAPMAVEFVCIVLI), 213 to 233 (ALPGALLAVILMEIVKWGFGF), and 247 to 267 (ALSALPILLLWIYLSWVSVLL).

This sequence belongs to the UPF0761 family.

It localises to the cell inner membrane. The sequence is that of UPF0761 membrane protein XAC0937 from Xanthomonas axonopodis pv. citri (strain 306).